Consider the following 257-residue polypeptide: MEIQSQPTNLTKEDVIKLIAEFQQNQCGEAQERLVDHYKNLVYSIAYRYSKGGPMHEDIIQVGMLGLLGAIRRYDYSIGNAFEPFAIPTIVGEIKKYLRDKTWGIHVPRRIKDLGGKIKLAIEELTDHLQRSPKIIEIADHLGLSEEEVLEIMDAKNNYRVSSLDDVVENASDGSSVARIESVGEVEQGYEQTERRLVLKDIFNVLNETEKSVIHYIFEENLNQKDTGERLGISQMHVSRIKRQAISKLKQAAFLDT.

The Polymerase core binding signature appears at 58–71 (DIIQVGMLGLLGAI). Positions 224–243 (QKDTGERLGISQMHVSRIKR) form a DNA-binding region, H-T-H motif.

It belongs to the sigma-70 factor family. SigB subfamily.

Its function is as follows. Sigma factors are initiation factors that promote the attachment of RNA polymerase to specific initiation sites and are then released. The protein is RNA polymerase sigma-B factor (sigB) of Bacillus anthracis.